We begin with the raw amino-acid sequence, 658 residues long: Threonine--tRNA ligase (658 aa).

In terms of domain architecture, TGS spans 1–64; the sequence is MSNTVSLQFP…GASGKVEIIT (64 aa). The interval 246 to 548 is catalytic; that stretch reads DHRRLGREMD…LIENFAGHMP (303 aa). Zn(2+) is bound by residues C343, H394, and H525.

The protein belongs to the class-II aminoacyl-tRNA synthetase family. Homodimer. Requires Zn(2+) as cofactor.

It localises to the cytoplasm. It carries out the reaction tRNA(Thr) + L-threonine + ATP = L-threonyl-tRNA(Thr) + AMP + diphosphate + H(+). In terms of biological role, catalyzes the attachment of threonine to tRNA(Thr) in a two-step reaction: L-threonine is first activated by ATP to form Thr-AMP and then transferred to the acceptor end of tRNA(Thr). Also edits incorrectly charged L-seryl-tRNA(Thr). In Brucella melitensis biotype 1 (strain ATCC 23456 / CCUG 17765 / NCTC 10094 / 16M), this protein is Threonine--tRNA ligase.